We begin with the raw amino-acid sequence, 185 residues long: Ribosome-recycling factor (185 aa).

It belongs to the RRF family.

It localises to the cytoplasm. Functionally, responsible for the release of ribosomes from messenger RNA at the termination of protein biosynthesis. May increase the efficiency of translation by recycling ribosomes from one round of translation to another. This Histophilus somni (strain 2336) (Haemophilus somnus) protein is Ribosome-recycling factor.